Here is a 943-residue protein sequence, read N- to C-terminus: Translation initiation factor IF-2 (943 aa).

Residues 99 to 113 are compositionally biased toward low complexity; it reads VKAAQTQAAPVQPEQ. Residues 99–354 are disordered; sequence VKAAQTQAAP…LEPNQHAFQA (256 aa). A compositionally biased stretch (basic and acidic residues) spans 117-141; sequence DAVKARAEAAARAEARAKAEAEAAK. Residues 145–172 show a composition bias toward low complexity; that stretch reads AKAGNKAKPAAQKPTEAKAETAPVAAET. A compositionally biased stretch (basic and acidic residues) spans 173-197; the sequence is KPAEPKEKAVKPKHERNGKGKDAKK. The segment covering 200–215 has biased composition (low complexity); the sequence is KPAAPAVPQPVVSAEE. Over residues 216–250 the composition is skewed to basic and acidic residues; it reads QAQRDEEARRAAALRAHQEALLKEKQERQARREAM. A compositionally biased stretch (low complexity) spans 251–264; sequence KQQAEQQAKAAQEA. Basic and acidic residues-rich tracts occupy residues 295–308 and 319–335; these read AKKEDRRNRDDEGQ and GGRDRNNARNGGDERVR. The 170-residue stretch at 443–612 folds into the tr-type G domain; that stretch reads PRPPVVTVMG…LLEAEVLELT (170 aa). The tract at residues 452 to 459 is G1; the sequence is GHVDHGKT. 452–459 lines the GTP pocket; it reads GHVDHGKT. The segment at 477 to 481 is G2; the sequence is GITQH. Residues 498–501 are G3; sequence DTPG. GTP contacts are provided by residues 498–502 and 552–555; these read DTPGH and NKID. The segment at 552–555 is G4; that stretch reads NKID. The G5 stretch occupies residues 588–590; that stretch reads SAK.

Belongs to the TRAFAC class translation factor GTPase superfamily. Classic translation factor GTPase family. IF-2 subfamily.

It is found in the cytoplasm. One of the essential components for the initiation of protein synthesis. Protects formylmethionyl-tRNA from spontaneous hydrolysis and promotes its binding to the 30S ribosomal subunits. Also involved in the hydrolysis of GTP during the formation of the 70S ribosomal complex. The chain is Translation initiation factor IF-2 from Neisseria gonorrhoeae (strain NCCP11945).